The primary structure comprises 80 residues: Large ribosomal subunit protein bL31 (80 aa).

This sequence belongs to the bacterial ribosomal protein bL31 family. Type A subfamily. As to quaternary structure, part of the 50S ribosomal subunit.

Binds the 23S rRNA. The polypeptide is Large ribosomal subunit protein bL31 (Nostoc punctiforme (strain ATCC 29133 / PCC 73102)).